A 248-amino-acid polypeptide reads, in one-letter code: PF03932 family protein CutC (248 aa).

Belongs to the CutC family. As to quaternary structure, homodimer.

The protein localises to the cytoplasm. The protein is PF03932 family protein CutC of Escherichia coli O139:H28 (strain E24377A / ETEC).